The sequence spans 215 residues: Glutathione S-transferase D4 (215 aa).

A GST N-terminal domain is found at 1-80; it reads MDFYYSPRSS…YLVEKYGKDD (80 aa). Residues Ser-9, 50 to 52, and 64 to 66 each bind glutathione; these read HTI and ESR. Residues 86-207 enclose the GST C-terminal domain; the sequence is DPQKRALINQ…KGLLQMKTMY (122 aa).

This sequence belongs to the GST superfamily. Delta family. In terms of assembly, homodimer.

The catalysed reaction is RX + glutathione = an S-substituted glutathione + a halide anion + H(+). Functionally, conjugation of reduced glutathione to a wide number of exogenous and endogenous hydrophobic electrophiles. May be involved in detoxification. The chain is Glutathione S-transferase D4 from Drosophila melanogaster (Fruit fly).